Here is a 337-residue protein sequence, read N- to C-terminus: 1-aminocyclopropane-1-carboxylate deaminase (337 aa).

Lys-50 carries the N6-(pyridoxal phosphate)lysine modification. Catalysis depends on Ser-77, which acts as the Nucleophile.

It belongs to the ACC deaminase/D-cysteine desulfhydrase family. In terms of assembly, homotrimer. The cofactor is pyridoxal 5'-phosphate.

The enzyme catalyses 1-aminocyclopropane-1-carboxylate + H2O = 2-oxobutanoate + NH4(+). Functionally, catalyzes a cyclopropane ring-opening reaction, the irreversible conversion of 1-aminocyclopropane-1-carboxylate (ACC) to ammonia and alpha-ketobutyrate. Allows growth on ACC as a nitrogen source. This Methylobacterium nodulans (strain LMG 21967 / CNCM I-2342 / ORS 2060) protein is 1-aminocyclopropane-1-carboxylate deaminase.